Reading from the N-terminus, the 315-residue chain is Ribose-phosphate pyrophosphokinase (315 aa).

Residues 37–39 (DGE) and 96–97 (RQ) each bind ATP. 2 residues coordinate Mg(2+): histidine 131 and aspartate 170. Residue lysine 194 is part of the active site. D-ribose 5-phosphate-binding positions include arginine 196, aspartate 220, and 224 to 228 (DTGGT).

Belongs to the ribose-phosphate pyrophosphokinase family. Class I subfamily. As to quaternary structure, homohexamer. Mg(2+) serves as cofactor.

It localises to the cytoplasm. It carries out the reaction D-ribose 5-phosphate + ATP = 5-phospho-alpha-D-ribose 1-diphosphate + AMP + H(+). Its pathway is metabolic intermediate biosynthesis; 5-phospho-alpha-D-ribose 1-diphosphate biosynthesis; 5-phospho-alpha-D-ribose 1-diphosphate from D-ribose 5-phosphate (route I): step 1/1. Its function is as follows. Involved in the biosynthesis of the central metabolite phospho-alpha-D-ribosyl-1-pyrophosphate (PRPP) via the transfer of pyrophosphoryl group from ATP to 1-hydroxyl of ribose-5-phosphate (Rib-5-P). This Buchnera aphidicola subsp. Schizaphis graminum (strain Sg) protein is Ribose-phosphate pyrophosphokinase.